Consider the following 452-residue polypeptide: UDP-N-acetylmuramoyl-L-alanine--L-glutamate ligase (452 aa).

118–124 contributes to the ATP binding site; sequence GSKGKST.

The protein belongs to the MurCDEF family. MurD2 subfamily.

It is found in the cytoplasm. It catalyses the reaction UDP-N-acetyl-alpha-D-muramoyl-L-alanine + L-glutamate + ATP = UDP-N-acetyl-alpha-D-muramoyl-L-alanyl-L-glutamate + ADP + phosphate + H(+). The protein operates within cell wall biogenesis; peptidoglycan biosynthesis. In terms of biological role, cell wall formation. Catalyzes the addition of L-glutamate to the nucleotide precursor UDP-N-acetylmuramoyl-L-alanine. The sequence is that of UDP-N-acetylmuramoyl-L-alanine--L-glutamate ligase from Micromonospora sp. (strain ATCC 39149 / NRRL 15099 / SCC 1413).